Here is a 244-residue protein sequence, read N- to C-terminus: MEIGKNNMDTCNMASSDKDVKIHFKVARFIMEAGVKLGMHSVPIATACTIYHKFYKETSLENYDPHLVAMSAIYLAGKVEEQHLRTRDIINVCHRYNNPGSEPLEVDSKFWELRDNIVHCELLMLRMLNFRVSFQHPHKYLLHYLISLKNWMNRHSWERTPIATAAWALLRDSYHGDLCLRYEPQQIAVAVLYFALQCYGVEVPSNSNAETSWWQVFSEDITILTINNIISDLIHIYTMDTEIV.

This sequence belongs to the cyclin family. Cyclin-like FAM58 subfamily.

Functionally, may be an activating cyclin for the cyclin-associated kinase CDK10. The protein is Cyclin-Q (ccnq) of Xenopus laevis (African clawed frog).